The chain runs to 569 residues: Paxillin-B (569 aa).

The LD motif 1 motif lies at 10–18 (DLDLLLADL). Polar residues predominate over residues 62-78 (QPQTVQTISTPAPKNHN). Residues 62–103 (QPQTVQTISTPAPKNHNTTTTTASFSVSSQPAPQPPQQSQQI) are disordered. The span at 79-102 (TTTTTASFSVSSQPAPQPPQQSQQ) shows a compositional bias: low complexity. An LD motif 2 motif is present at residues 106–112 (LDDLDEL). Positions 129–311 (TTPEEHITHA…SPKVVHGDDL (183 aa)) are disordered. Over residues 150–161 (NTSSTNSASSLS) the composition is skewed to low complexity. 2 stretches are compositionally biased toward polar residues: residues 162 to 188 (RPNN…TTKK) and 196 to 206 (TLETTSGNNVY). Residues 207 to 217 (SSQPSQSQPQP) are compositionally biased toward low complexity. The short motif at 232-239 (LDELLKGL) is the LD motif 3 element. Residues 258-272 (HQHHHQHQHHHHHNP) are compositionally biased toward basic residues. A compositionally biased stretch (low complexity) spans 273 to 301 (NHNQTQTVTTQINIGRTNTPNNNNNNNTN). Residues 311-318 (LDNLLNNL) carry the LD motif 4 motif. LIM zinc-binding domains follow at residues 334 to 391 (GTCG…QELF), 393 to 452 (ARCA…TFAV), 453 to 510 (RCGG…QQAG), and 511 to 569 (SVCS…KLFA).

This sequence belongs to the paxillin family. Expressed in the upper and lower cup of the fruiting body.

The protein resides in the cytoplasm. Its subcellular location is the cell cortex. It localises to the cell projection. The protein localises to the filopodium. It is found in the cell junction. The protein resides in the focal adhesion. Its subcellular location is the cytoskeleton. Required for cell-substrate adhesion, cell sorting, slug migration, and cell differentiation. May function upstream of limB. This Dictyostelium discoideum (Social amoeba) protein is Paxillin-B (paxB).